The chain runs to 277 residues: MKRKPAVAGLFYPSRRDELIEQIRMCFLDKRIGPGKLPGPVETKLQNPIGLVSPHAGYIYSGPVAAWGFLEAVKFGEPSVVVIIGPNHTGLGRPVGVWPEGEWETPLGTVPVNERAVEIVLSNSRYAEEDFMSHIREHSIEVQIPFLQFVFGEVSIVPICLMDQSPAVAEDLASALAKLVAEFPGVLIIASTDLNHYEDQRTTLRKDSYIIEAIEGMDPSLLYEYLVREDISMCGYGGVATLLNMDFENVRILKHATSGDVSGDTLEVVGYLSAILF.

Belongs to the MEMO1 family.

The polypeptide is MEMO1 family protein TM_0087 (Thermotoga maritima (strain ATCC 43589 / DSM 3109 / JCM 10099 / NBRC 100826 / MSB8)).